We begin with the raw amino-acid sequence, 882 residues long: Serine/threonine-protein kinase greatwall (882 aa).

An N-acetylmethionine modification is found at M1. The 804-residue stretch at 35–838 (FTIVKPISRG…MKELKRHHLF (804 aa)) folds into the Protein kinase domain. Residues 41–49 (ISRGAFGKV) and K62 each bind ATP. D156 functions as the Proton acceptor in the catalytic mechanism. Phosphothreonine is present on residues T207 and T222. S293, S371, and S454 each carry phosphoserine. T521 carries the phosphothreonine modification. 5 positions are modified to phosphoserine: S554, S558, S633, S660, and S671. Residues 713 to 736 (TPNQVKSGTPYRTPKSVRRGAAPV) are disordered. Phosphothreonine is present on T725. The residue at position 728 (S728) is a Phosphoserine. T744 is subject to Phosphothreonine; by CDK1. The AGC-kinase C-terminal domain occupies 839–882 (SDVDWENLQHQTMPFIPQPDDETDTSYFEARNNAQHLTISGFSL). S878 and S881 each carry phosphoserine.

This sequence belongs to the protein kinase superfamily. AGC Ser/Thr protein kinase family. Post-translationally, phosphorylation at Thr-744 by CDK1 during M phase activates its kinase activity. Maximum phosphorylation occurs in prometaphase.

Its subcellular location is the cytoplasm. The protein resides in the cytoskeleton. The protein localises to the microtubule organizing center. It is found in the centrosome. It localises to the nucleus. It catalyses the reaction L-seryl-[protein] + ATP = O-phospho-L-seryl-[protein] + ADP + H(+). The enzyme catalyses L-threonyl-[protein] + ATP = O-phospho-L-threonyl-[protein] + ADP + H(+). In terms of biological role, serine/threonine kinase that plays a key role in M phase by acting as a regulator of mitosis entry and maintenance. Acts by promoting the inactivation of protein phosphatase 2A (PP2A) during M phase: does not directly inhibit PP2A but acts by mediating phosphorylation and subsequent activation of ARPP19 and ENSA at 'Ser-62' and 'Ser-67', respectively. ARPP19 and ENSA are phosphatase inhibitors that specifically inhibit the PPP2R2D (PR55-delta) subunit of PP2A. Inactivation of PP2A during M phase is essential to keep cyclin-B1-CDK1 activity high. Following DNA damage, it is also involved in checkpoint recovery by being inhibited. This Ailuropoda melanoleuca (Giant panda) protein is Serine/threonine-protein kinase greatwall (MASTL).